The primary structure comprises 205 residues: Small ribosomal subunit protein uS4 (205 aa).

Residues arginine 110–leucine 172 enclose the S4 RNA-binding domain. Residues methionine 173–glutamate 205 are disordered. The span at alanine 174 to glutamate 205 shows a compositional bias: low complexity.

The protein belongs to the universal ribosomal protein uS4 family. In terms of assembly, part of the 30S ribosomal subunit. Contacts protein S5. The interaction surface between S4 and S5 is involved in control of translational fidelity.

In terms of biological role, one of the primary rRNA binding proteins, it binds directly to 16S rRNA where it nucleates assembly of the body of the 30S subunit. Its function is as follows. With S5 and S12 plays an important role in translational accuracy. In Methanocella arvoryzae (strain DSM 22066 / NBRC 105507 / MRE50), this protein is Small ribosomal subunit protein uS4.